A 279-amino-acid chain; its full sequence is Acetylglutamate kinase (279 aa).

Residues 64-65, R86, and N177 contribute to the substrate site; that span reads GG.

This sequence belongs to the acetylglutamate kinase family. ArgB subfamily.

The protein localises to the cytoplasm. The catalysed reaction is N-acetyl-L-glutamate + ATP = N-acetyl-L-glutamyl 5-phosphate + ADP. The protein operates within amino-acid biosynthesis; L-arginine biosynthesis; N(2)-acetyl-L-ornithine from L-glutamate: step 2/4. In terms of biological role, catalyzes the ATP-dependent phosphorylation of N-acetyl-L-glutamate. In Campylobacter jejuni (strain RM1221), this protein is Acetylglutamate kinase.